The primary structure comprises 968 residues: Glycine dehydrogenase (decarboxylating) (968 aa).

Lysine 717 bears the N6-(pyridoxal phosphate)lysine mark.

It belongs to the GcvP family. The glycine cleavage system is composed of four proteins: P, T, L and H. Pyridoxal 5'-phosphate is required as a cofactor.

The catalysed reaction is N(6)-[(R)-lipoyl]-L-lysyl-[glycine-cleavage complex H protein] + glycine + H(+) = N(6)-[(R)-S(8)-aminomethyldihydrolipoyl]-L-lysyl-[glycine-cleavage complex H protein] + CO2. Functionally, the glycine cleavage system catalyzes the degradation of glycine. The P protein binds the alpha-amino group of glycine through its pyridoxal phosphate cofactor; CO(2) is released and the remaining methylamine moiety is then transferred to the lipoamide cofactor of the H protein. The protein is Glycine dehydrogenase (decarboxylating) of Tropheryma whipplei (strain TW08/27) (Whipple's bacillus).